A 317-amino-acid chain; its full sequence is Transaldolase (317 aa).

The active-site Schiff-base intermediate with substrate is the Lys-132.

It belongs to the transaldolase family. Type 1 subfamily. As to quaternary structure, homodimer.

The protein localises to the cytoplasm. It catalyses the reaction D-sedoheptulose 7-phosphate + D-glyceraldehyde 3-phosphate = D-erythrose 4-phosphate + beta-D-fructose 6-phosphate. The protein operates within carbohydrate degradation; pentose phosphate pathway; D-glyceraldehyde 3-phosphate and beta-D-fructose 6-phosphate from D-ribose 5-phosphate and D-xylulose 5-phosphate (non-oxidative stage): step 2/3. Its function is as follows. Transaldolase is important for the balance of metabolites in the pentose-phosphate pathway. This chain is Transaldolase, found in Haemophilus influenzae (strain PittGG).